A 295-amino-acid polypeptide reads, in one-letter code: Protease HtpX (295 aa).

2 helical membrane passes run 4 to 24 (ILLF…TLSL) and 42 to 62 (QLLV…LFIS). Position 147 (His147) interacts with Zn(2+). The active site involves Glu148. A Zn(2+)-binding site is contributed by His151. Transmembrane regions (helical) follow at residues 158-178 (VTLA…ARII) and 195-215 (IAYF…ASAI). Position 224 (Glu224) interacts with Zn(2+).

This sequence belongs to the peptidase M48B family. It depends on Zn(2+) as a cofactor.

The protein localises to the cell inner membrane. The chain is Protease HtpX from Pseudomonas fluorescens (strain SBW25).